The chain runs to 180 residues: Large ribosomal subunit protein uL5 (180 aa).

The protein belongs to the universal ribosomal protein uL5 family. In terms of assembly, part of the 50S ribosomal subunit; part of the 5S rRNA/L5/L18/L25 subcomplex. Contacts the 5S rRNA and the P site tRNA. Forms a bridge to the 30S subunit in the 70S ribosome.

In terms of biological role, this is one of the proteins that bind and probably mediate the attachment of the 5S RNA into the large ribosomal subunit, where it forms part of the central protuberance. In the 70S ribosome it contacts protein S13 of the 30S subunit (bridge B1b), connecting the 2 subunits; this bridge is implicated in subunit movement. Contacts the P site tRNA; the 5S rRNA and some of its associated proteins might help stabilize positioning of ribosome-bound tRNAs. This is Large ribosomal subunit protein uL5 from Lactobacillus johnsonii (strain CNCM I-12250 / La1 / NCC 533).